A 131-amino-acid chain; its full sequence is MAKRNVTAKKKVVKKNIARGVVYISATFNNTNITITDEMGNVICWSTAGGLGFKGSKKSTPYAAQQAVESALSKAKEHGVKEVGIKVQGPGSGRETAIKSVGATEGVKVLWIKDITPLPHNGCRPPKRRRV.

The protein belongs to the universal ribosomal protein uS11 family. In terms of assembly, part of the 30S ribosomal subunit. Interacts with proteins S7 and S18. Binds to IF-3.

Its function is as follows. Located on the platform of the 30S subunit, it bridges several disparate RNA helices of the 16S rRNA. Forms part of the Shine-Dalgarno cleft in the 70S ribosome. This Helicobacter pylori (strain G27) protein is Small ribosomal subunit protein uS11.